Here is a 280-residue protein sequence, read N- to C-terminus: Fructose-1,6-bisphosphatase class 1 (280 aa).

Glu-64, Asp-83, Leu-85, and Asp-86 together coordinate Mg(2+). Substrate is bound by residues 86–89 (DGSS), Tyr-189, and Lys-220. Glu-226 provides a ligand contact to Mg(2+).

It belongs to the FBPase class 1 family. Homotetramer. The cofactor is Mg(2+).

The protein resides in the cytoplasm. The catalysed reaction is beta-D-fructose 1,6-bisphosphate + H2O = beta-D-fructose 6-phosphate + phosphate. It functions in the pathway carbohydrate biosynthesis; gluconeogenesis. This is Fructose-1,6-bisphosphatase class 1 from Campylobacter jejuni subsp. doylei (strain ATCC BAA-1458 / RM4099 / 269.97).